The primary structure comprises 505 residues: Lysine--tRNA ligase (505 aa).

Residues 1 to 11 (MSDQQLDQPSL) are compositionally biased toward polar residues. The interval 1–23 (MSDQQLDQPSLSHEERQHEENKL) is disordered. Over residues 12–23 (SHEERQHEENKL) the composition is skewed to basic and acidic residues. 2 residues coordinate Mg(2+): Glu-415 and Glu-422.

This sequence belongs to the class-II aminoacyl-tRNA synthetase family. In terms of assembly, homodimer. The cofactor is Mg(2+).

The protein localises to the cytoplasm. It carries out the reaction tRNA(Lys) + L-lysine + ATP = L-lysyl-tRNA(Lys) + AMP + diphosphate. This is Lysine--tRNA ligase from Ectopseudomonas mendocina (strain ymp) (Pseudomonas mendocina).